Consider the following 940-residue polypeptide: Isoleucine--tRNA ligase (940 aa).

The short motif at 58–68 is the 'HIGH' region element; the sequence is PYANGSIHIGH. Residue E564 participates in L-isoleucyl-5'-AMP binding. Positions 605–609 match the 'KMSKS' region motif; the sequence is KMSKS. K608 contributes to the ATP binding site. The Zn(2+) site is built by C903, C906, C923, and C926.

This sequence belongs to the class-I aminoacyl-tRNA synthetase family. IleS type 1 subfamily. Monomer. The cofactor is Zn(2+).

Its subcellular location is the cytoplasm. The catalysed reaction is tRNA(Ile) + L-isoleucine + ATP = L-isoleucyl-tRNA(Ile) + AMP + diphosphate. Its function is as follows. Catalyzes the attachment of isoleucine to tRNA(Ile). As IleRS can inadvertently accommodate and process structurally similar amino acids such as valine, to avoid such errors it has two additional distinct tRNA(Ile)-dependent editing activities. One activity is designated as 'pretransfer' editing and involves the hydrolysis of activated Val-AMP. The other activity is designated 'posttransfer' editing and involves deacylation of mischarged Val-tRNA(Ile). In Shewanella baltica (strain OS185), this protein is Isoleucine--tRNA ligase.